The following is a 338-amino-acid chain: Eukaryotic translation initiation factor 3 subunit H (338 aa).

Residues 22 to 154 (VQCDGLAVMK…LKAYRLTPQA (133 aa)) enclose the MPN domain.

The protein belongs to the eIF-3 subunit H family. In terms of assembly, component of the eukaryotic translation initiation factor 3 (eIF-3) complex. The eIF-3 complex interacts with pix. Interacts with mxt.

The protein resides in the cytoplasm. Its function is as follows. Component of the eukaryotic translation initiation factor 3 (eIF-3) complex, which is involved in protein synthesis of a specialized repertoire of mRNAs and, together with other initiation factors, stimulates binding of mRNA and methionyl-tRNAi to the 40S ribosome. The eIF-3 complex specifically targets and initiates translation of a subset of mRNAs involved in cell proliferation. The protein is Eukaryotic translation initiation factor 3 subunit H of Drosophila melanogaster (Fruit fly).